The chain runs to 203 residues: dITP/XTP pyrophosphatase (203 aa).

Substrate is bound at residue 8–13 (TANKGK). Residues Glu41 and Asp70 each coordinate Mg(2+). Asp70 (proton acceptor) is an active-site residue. Residues Ser71, 153-156 (FGYD), Lys176, and 181-182 (HR) contribute to the substrate site.

This sequence belongs to the HAM1 NTPase family. Homodimer. Mg(2+) is required as a cofactor.

The catalysed reaction is XTP + H2O = XMP + diphosphate + H(+). The enzyme catalyses dITP + H2O = dIMP + diphosphate + H(+). It catalyses the reaction ITP + H2O = IMP + diphosphate + H(+). In terms of biological role, pyrophosphatase that catalyzes the hydrolysis of nucleoside triphosphates to their monophosphate derivatives, with a high preference for the non-canonical purine nucleotides XTP (xanthosine triphosphate), dITP (deoxyinosine triphosphate) and ITP. Seems to function as a house-cleaning enzyme that removes non-canonical purine nucleotides from the nucleotide pool, thus preventing their incorporation into DNA/RNA and avoiding chromosomal lesions. The chain is dITP/XTP pyrophosphatase from Listeria innocua serovar 6a (strain ATCC BAA-680 / CLIP 11262).